The following is a 761-amino-acid chain: Centrosomal protein of 85 kDa (761 aa).

Disordered regions lie at residues 1 to 33 and 95 to 117; these read MAMQ…TEWQ and PSTL…SAKL. The span at 14–33 shows a compositional bias: polar residues; it reads ATSPGSNVIQKGSSLGTEWQ. Position 16 is a phosphoserine (Ser16). Phosphoserine is present on Ser140. Disordered regions lie at residues 226-279 and 435-472; these read KAPG…GEQS and KHSE…REKQ. The segment at 256–432 is mediates interaction with NEK2 and is required for its function in the suppression of centrosome disjunction; it reads GLSKSLSSQV…QLIRESLKVT (177 aa). 2 coiled-coil regions span residues 333 to 656 and 723 to 749; these read EHLL…RQAQ and DVIR…LSDR. The tract at residues 433–475 is required for centrosome localization and for its function in the suppression of centrosome disjunction; it reads LQKHSEEGKKQEERVKGRDKHINNLKKKCQKESEQNREKQQRI. 2 stretches are compositionally biased toward basic and acidic residues: residues 435–454 and 462–472; these read KHSE…DKHI and QKESEQNREKQ.

It belongs to the CEP85 family. Homodimer. Interacts with STIL (via N-terminus); this interaction is essential for robust PLK4 activation and efficient centriole assembly and for PLK4-dependent cell migration. Interacts with PLK4; required for CEP85 to be able to drive centriole duplication and cell migration.

The protein resides in the cytoplasm. It is found in the cytoskeleton. Its subcellular location is the microtubule organizing center. It localises to the centrosome. The protein localises to the spindle pole. The protein resides in the nucleus. It is found in the nucleolus. Its subcellular location is the centriole. It localises to the cell cortex. Its function is as follows. Acts as a regulator of centriole duplication through a direct interaction with STIL, a key factor involved in the early steps of centriole formation. The CEP85-STIL protein complex acts as a modulator of PLK4-driven cytoskeletal rearrangements and directional cell motility. Acts as a negative regulator of NEK2 to maintain the centrosome integrity in interphase. Suppresses centrosome disjunction by inhibiting NEK2 kinase activity. The chain is Centrosomal protein of 85 kDa (Cep85) from Mus musculus (Mouse).